We begin with the raw amino-acid sequence, 255 residues long: Small ribosomal subunit protein uS2 (255 aa).

The tract at residues glutamine 230–glycine 255 is disordered.

This sequence belongs to the universal ribosomal protein uS2 family.

The protein is Small ribosomal subunit protein uS2 of Rhizobium etli (strain CIAT 652).